A 190-amino-acid polypeptide reads, in one-letter code: Holliday junction branch migration complex subunit RuvA (190 aa).

A domain I region spans residues 1 to 64 (MIGKLSGTLD…EDAQILYGFA (64 aa)). The tract at residues 65–137 (TSQERAAFRE…LKGKLGPDIG (73 aa)) is domain II. The segment at 137 to 141 (GVAAS) is flexible linker. Residues 142-190 (VANDSQADILQALLALGYSDKEAAAALKALPSDVGVSEGIRLALRALGK) form a domain III region.

This sequence belongs to the RuvA family. Homotetramer. Forms an RuvA(8)-RuvB(12)-Holliday junction (HJ) complex. HJ DNA is sandwiched between 2 RuvA tetramers; dsDNA enters through RuvA and exits via RuvB. An RuvB hexamer assembles on each DNA strand where it exits the tetramer. Each RuvB hexamer is contacted by two RuvA subunits (via domain III) on 2 adjacent RuvB subunits; this complex drives branch migration. In the full resolvosome a probable DNA-RuvA(4)-RuvB(12)-RuvC(2) complex forms which resolves the HJ.

Its subcellular location is the cytoplasm. In terms of biological role, the RuvA-RuvB-RuvC complex processes Holliday junction (HJ) DNA during genetic recombination and DNA repair, while the RuvA-RuvB complex plays an important role in the rescue of blocked DNA replication forks via replication fork reversal (RFR). RuvA specifically binds to HJ cruciform DNA, conferring on it an open structure. The RuvB hexamer acts as an ATP-dependent pump, pulling dsDNA into and through the RuvAB complex. HJ branch migration allows RuvC to scan DNA until it finds its consensus sequence, where it cleaves and resolves the cruciform DNA. The chain is Holliday junction branch migration complex subunit RuvA from Albidiferax ferrireducens (strain ATCC BAA-621 / DSM 15236 / T118) (Rhodoferax ferrireducens).